The primary structure comprises 221 residues: Oxaloacetate tautomerase FAHD1, mitochondrial (221 aa).

The transit peptide at 1–24 (MAASRPLSRFWEWGKNIVCVGRNY) directs the protein to the mitochondrion. Ser37 carries the phosphoserine modification. Mg(2+) contacts are provided by Glu68, Glu70, and Asp99. At Lys110 the chain carries N6-acetyllysine. Lys112 carries the N6-succinyllysine modification.

It belongs to the FAH family. As to quaternary structure, homodimer. Mg(2+) is required as a cofactor. Requires Mn(2+) as cofactor.

It localises to the mitochondrion. The protein resides in the cytoplasm. The protein localises to the cytosol. It catalyses the reaction oxaloacetate = enol-oxaloacetate. It carries out the reaction oxaloacetate + H(+) = pyruvate + CO2. The catalysed reaction is a 3-acylpyruvate + H2O = a carboxylate + pyruvate + H(+). The enzyme catalyses acetylpyruvate + H2O = acetate + pyruvate + H(+). It catalyses the reaction 3-fumarylpyruvate + H2O = fumarate + pyruvate + H(+). With respect to regulation, oxaloacetate decarboxylation is competitively inhibited by oxalate. Tautomerase that converts enol-oxaloacetate, a strong inhibitor of succinate dehydrogenase, to the physiological keto form of oxaloacetate. It is thereby required to maximize aerobic respiration efficiency by preventing succinate dehydrogenase inhibition. Also acts as a weak oxaloacetate decarboxylase (ODx), catalyzing the decarboxylation of oxaloacetate (OAA) to pyruvate and CO(2), and as such is likely a regulatory enzyme in the TCA cycle. Also displays acylpyruvase activity, being able to hydrolyze acetylpyruvate and fumarylpyruvate in vitro. The protein is Oxaloacetate tautomerase FAHD1, mitochondrial of Bos taurus (Bovine).